Reading from the N-terminus, the 59-residue chain is Conotoxin ViVA (59 aa).

Positions 1–19 are cleaved as a signal peptide; that stretch reads MRCVPVFIILLLLIPSASS. Positions 20–46 are excised as a propeptide; that stretch reads AAVQPKTEKDDVPLASVHDSALRILSR. Gln47 is subject to Pyrrolidone carboxylic acid. Disulfide bonds link Cys48-Cys55 and Cys49-Cys56. The residue at position 58 (Ile58) is an Isoleucine amide.

Belongs to the conotoxin T superfamily. As to expression, expressed by the venom duct.

It is found in the secreted. In Conus virgo (Virgin cone), this protein is Conotoxin ViVA.